Reading from the N-terminus, the 787-residue chain is LPS-assembly protein LptD (787 aa).

Residues 1–78 (MAAGLPPLVV…AAGAAPAESG (78 aa)) are disordered. A compositionally biased stretch (low complexity) spans 59–78 (LPPVGTPAEPAAGAAPAESG).

It belongs to the LptD family. Component of the lipopolysaccharide transport and assembly complex. Interacts with LptE and LptA.

Functionally, together with LptE, is involved in the assembly of lipopolysaccharide (LPS) at the surface of the outer membrane. This is LPS-assembly protein LptD from Aromatoleum aromaticum (strain DSM 19018 / LMG 30748 / EbN1) (Azoarcus sp. (strain EbN1)).